We begin with the raw amino-acid sequence, 195 residues long: Nucleoside triphosphate pyrophosphatase (195 aa).

The active-site Proton acceptor is aspartate 70.

Belongs to the Maf family. The cofactor is a divalent metal cation.

The protein localises to the cytoplasm. It carries out the reaction a ribonucleoside 5'-triphosphate + H2O = a ribonucleoside 5'-phosphate + diphosphate + H(+). It catalyses the reaction a 2'-deoxyribonucleoside 5'-triphosphate + H2O = a 2'-deoxyribonucleoside 5'-phosphate + diphosphate + H(+). Nucleoside triphosphate pyrophosphatase. May have a dual role in cell division arrest and in preventing the incorporation of modified nucleotides into cellular nucleic acids. This chain is Nucleoside triphosphate pyrophosphatase, found in Cyanothece sp. (strain PCC 7425 / ATCC 29141).